A 425-amino-acid polypeptide reads, in one-letter code: Serine hydroxymethyltransferase (425 aa).

(6S)-5,6,7,8-tetrahydrofolate contacts are provided by residues Leu120 and 124-126 (GHL). The residue at position 229 (Lys229) is an N6-(pyridoxal phosphate)lysine. Position 353-355 (353-355 (SPF)) interacts with (6S)-5,6,7,8-tetrahydrofolate.

The protein belongs to the SHMT family. As to quaternary structure, homodimer. It depends on pyridoxal 5'-phosphate as a cofactor.

It is found in the cytoplasm. It catalyses the reaction (6R)-5,10-methylene-5,6,7,8-tetrahydrofolate + glycine + H2O = (6S)-5,6,7,8-tetrahydrofolate + L-serine. It participates in one-carbon metabolism; tetrahydrofolate interconversion. It functions in the pathway amino-acid biosynthesis; glycine biosynthesis; glycine from L-serine: step 1/1. Catalyzes the reversible interconversion of serine and glycine with tetrahydrofolate (THF) serving as the one-carbon carrier. This reaction serves as the major source of one-carbon groups required for the biosynthesis of purines, thymidylate, methionine, and other important biomolecules. Also exhibits THF-independent aldolase activity toward beta-hydroxyamino acids, producing glycine and aldehydes, via a retro-aldol mechanism. In Thermosynechococcus vestitus (strain NIES-2133 / IAM M-273 / BP-1), this protein is Serine hydroxymethyltransferase.